The sequence spans 1368 residues: DNA-directed RNA polymerase subunit beta (1368 aa).

It belongs to the RNA polymerase beta chain family. As to quaternary structure, the RNAP catalytic core consists of 2 alpha, 1 beta, 1 beta' and 1 omega subunit. When a sigma factor is associated with the core the holoenzyme is formed, which can initiate transcription.

It carries out the reaction RNA(n) + a ribonucleoside 5'-triphosphate = RNA(n+1) + diphosphate. DNA-dependent RNA polymerase catalyzes the transcription of DNA into RNA using the four ribonucleoside triphosphates as substrates. The protein is DNA-directed RNA polymerase subunit beta of Herminiimonas arsenicoxydans.